A 157-amino-acid polypeptide reads, in one-letter code: Phosphopantetheine adenylyltransferase (157 aa).

A substrate-binding site is contributed by Thr-8. Residues 8–9 (TF) and His-16 contribute to the ATP site. 3 residues coordinate substrate: Lys-40, Thr-72, and Arg-86. ATP is bound by residues 87–89 (GLR), Glu-97, and 122–128 (YSFLSSS).

Belongs to the bacterial CoaD family. In terms of assembly, homohexamer. The cofactor is Mg(2+).

The protein localises to the cytoplasm. The enzyme catalyses (R)-4'-phosphopantetheine + ATP + H(+) = 3'-dephospho-CoA + diphosphate. Its pathway is cofactor biosynthesis; coenzyme A biosynthesis; CoA from (R)-pantothenate: step 4/5. Reversibly transfers an adenylyl group from ATP to 4'-phosphopantetheine, yielding dephospho-CoA (dPCoA) and pyrophosphate. The protein is Phosphopantetheine adenylyltransferase of Prochlorococcus marinus (strain MIT 9312).